Reading from the N-terminus, the 188-residue chain is Small ribosomal subunit protein bS18c (188 aa).

Over residues 1–19 the composition is skewed to low complexity; the sequence is MNNQSFNNFSQVNSNSSFF. The segment at 1 to 79 is disordered; it reads MNNQSFNNFS…TSNKRKVLSV (79 aa). Residues 25 to 71 show a composition bias toward polar residues; it reads NLQNTNLEMTNGTNPPSSFSKQTPQKRQSFGTNTNFSKGNSSRGSTS.

The protein belongs to the bacterial ribosomal protein bS18 family. In terms of assembly, part of the 30S ribosomal subunit.

The protein localises to the plastid. The protein resides in the chloroplast. The sequence is that of Small ribosomal subunit protein bS18c from Tetradesmus obliquus (Green alga).